We begin with the raw amino-acid sequence, 178 residues long: Large ribosomal subunit protein uL5 (178 aa).

It belongs to the universal ribosomal protein uL5 family. In terms of assembly, part of the 50S ribosomal subunit; part of the 5S rRNA/L5/L18/L25 subcomplex. Contacts the 5S rRNA and the P site tRNA. Forms a bridge to the 30S subunit in the 70S ribosome.

Functionally, this is one of the proteins that bind and probably mediate the attachment of the 5S RNA into the large ribosomal subunit, where it forms part of the central protuberance. In the 70S ribosome it contacts protein S13 of the 30S subunit (bridge B1b), connecting the 2 subunits; this bridge is implicated in subunit movement. Contacts the P site tRNA; the 5S rRNA and some of its associated proteins might help stabilize positioning of ribosome-bound tRNAs. This Aliivibrio fischeri (strain ATCC 700601 / ES114) (Vibrio fischeri) protein is Large ribosomal subunit protein uL5.